The sequence spans 187 residues: NADH-quinone oxidoreductase subunit B (187 aa).

Residues Cys-51, Cys-52, Cys-117, and Cys-149 each coordinate [4Fe-4S] cluster.

Belongs to the complex I 20 kDa subunit family. As to quaternary structure, NDH-1 is composed of 14 different subunits. Subunits NuoB, C, D, E, F, and G constitute the peripheral sector of the complex. Requires [4Fe-4S] cluster as cofactor.

It is found in the cell inner membrane. The catalysed reaction is a quinone + NADH + 5 H(+)(in) = a quinol + NAD(+) + 4 H(+)(out). Functionally, NDH-1 shuttles electrons from NADH, via FMN and iron-sulfur (Fe-S) centers, to quinones in the respiratory chain. The immediate electron acceptor for the enzyme in this species is believed to be ubiquinone. Couples the redox reaction to proton translocation (for every two electrons transferred, four hydrogen ions are translocated across the cytoplasmic membrane), and thus conserves the redox energy in a proton gradient. This is NADH-quinone oxidoreductase subunit B from Nitratidesulfovibrio vulgaris (strain DSM 19637 / Miyazaki F) (Desulfovibrio vulgaris).